We begin with the raw amino-acid sequence, 228 residues long: Phosphoglycolate phosphatase (228 aa).

D9 functions as the Nucleophile in the catalytic mechanism. Residues D9 and D11 each contribute to the Mg(2+) site. A substrate-binding site is contributed by K151. Residues D174 and D178 each contribute to the Mg(2+) site.

It belongs to the archaeal SPP-like hydrolase family. Mg(2+) serves as cofactor.

The catalysed reaction is 2-phosphoglycolate + H2O = glycolate + phosphate. Functionally, catalyzes the dephosphorylation of 2-phosphoglycolate. This is Phosphoglycolate phosphatase from Pyrobaculum neutrophilum (strain DSM 2338 / JCM 9278 / NBRC 100436 / V24Sta) (Thermoproteus neutrophilus).